The chain runs to 338 residues: Mugineic-acid 3-dioxygenase (338 aa).

Residues D180–P283 enclose the Fe2OG dioxygenase domain. 3 residues coordinate Fe cation: H208, D210, and H264. 2-oxoglutarate is bound at residue R274.

The protein belongs to the iron/ascorbate-dependent oxidoreductase family. The cofactor is Fe(2+). L-ascorbate serves as cofactor. In terms of tissue distribution, expressed in roots, but not in leaves.

The enzyme catalyses mugineate + 2-oxoglutarate + O2 = 3-epihydroxymugineate + succinate + CO2 + H(+). It catalyses the reaction 2'-deoxymugineate + 2-oxoglutarate + O2 = 3-epihydroxy-2'-deoxymugineate + succinate + CO2 + H(+). Functionally, involved in the biosynthesis of mugineic acid family of phytosiderophores. Hydroxylates the C-3 positions of mugineic acid (MA) and 2'-deoxymugineic acid (DMA). May be involved in boron tolerance. The protein is Mugineic-acid 3-dioxygenase (IDS2) of Hordeum vulgare (Barley).